Here is a 414-residue protein sequence, read N- to C-terminus: Serine/arginine (SR)-type shuttling mRNA binding protein NPL3 (414 aa).

Basic and acidic residues predominate over residues methionine 1 to glutamine 11. The tract at residues methionine 1 to glutamate 119 is disordered. Residue serine 15 is modified to Phosphoserine. The span at aspartate 33–proline 51 shows a compositional bias: low complexity. The segment covering glutamine 52–asparagine 68 has biased composition (pro residues). Basic and acidic residues predominate over residues glutamate 75–proline 92. A Phosphoserine modification is found at serine 79. Pro residues predominate over residues proline 93–glycine 105. RRM domains follow at residues threonine 125 to leucine 195 and tyrosine 200 to asparagine 275. Phosphoserine occurs at positions 182, 212, and 224. The interval threonine 269 to glycine 299 is disordered. Residues glycine 286 to glycine 299 show a composition bias toward gly residues. Arginine 288, arginine 290, arginine 294, and arginine 298 each carry dimethylated arginine. Position 302 is an omega-N-methylarginine (arginine 302). Dimethylated arginine; alternate occurs at positions 307 and 314. Residues arginine 307 and arginine 314 each carry the omega-N-methylarginine; alternate modification. An omega-N-methylarginine mark is found at arginine 321, arginine 329, arginine 337, and arginine 344. The interval serine 343–arginine 414 is disordered. Low complexity predominate over residues glycine 346–glycine 360. Arginine 351 carries the post-translational modification Dimethylated arginine; alternate. Omega-N-methylarginine; alternate is present on arginine 351. Phosphoserine is present on serine 356. Arginine 358, arginine 363, arginine 377, and arginine 384 each carry dimethylated arginine; alternate. 4 positions are modified to omega-N-methylarginine; alternate: arginine 358, arginine 363, arginine 377, and arginine 384. A compositionally biased stretch (gly residues) spans serine 379–glycine 389. Arginine 391 carries the post-translational modification Omega-N-methylarginine. Residues aspartate 399–arginine 414 are compositionally biased toward basic and acidic residues.

Belongs to the RRM GAR family. Interacts with RRP6. In terms of processing, methylated by HMT1. The methylation is required for nuclear export.

It is found in the cytoplasm. The protein localises to the nucleus. The protein resides in the stress granule. Its function is as follows. Involved in mRNA processing and export. Required for efficient splicing of a large set of pre-mRNAs by efficient co-transcriptional recruitment of the splicing machinery. Remains associated with the mRNP during early steps of translation elongation. This is Serine/arginine (SR)-type shuttling mRNA binding protein NPL3 from Saccharomyces cerevisiae (strain ATCC 204508 / S288c) (Baker's yeast).